Consider the following 396-residue polypeptide: NADH-quinone oxidoreductase subunit D (396 aa).

The protein belongs to the complex I 49 kDa subunit family. In terms of assembly, NDH-1 is composed of 14 different subunits. Subunits NuoB, C, D, E, F, and G constitute the peripheral sector of the complex.

Its subcellular location is the cell inner membrane. It carries out the reaction a quinone + NADH + 5 H(+)(in) = a quinol + NAD(+) + 4 H(+)(out). NDH-1 shuttles electrons from NADH, via FMN and iron-sulfur (Fe-S) centers, to quinones in the respiratory chain. The immediate electron acceptor for the enzyme in this species is believed to be ubiquinone. Couples the redox reaction to proton translocation (for every two electrons transferred, four hydrogen ions are translocated across the cytoplasmic membrane), and thus conserves the redox energy in a proton gradient. In Orientia tsutsugamushi (strain Boryong) (Rickettsia tsutsugamushi), this protein is NADH-quinone oxidoreductase subunit D.